A 512-amino-acid polypeptide reads, in one-letter code: Ribonuclease Y (512 aa).

Residues 2 to 22 form a helical membrane-spanning segment; the sequence is VGMYIIIPIVTFIIGGLLAWL. The region spanning 202 to 262 is the KH domain; it reads SITVFHIESD…VRREIARLAL (61 aa). Residues 328–421 enclose the HD domain; the sequence is LLQHARETAN…VQVCDAISGA (94 aa).

The protein belongs to the RNase Y family.

Its subcellular location is the cell membrane. Endoribonuclease that initiates mRNA decay. This chain is Ribonuclease Y, found in Parabacteroides distasonis (strain ATCC 8503 / DSM 20701 / CIP 104284 / JCM 5825 / NCTC 11152).